The primary structure comprises 562 residues: Extracellular matrix protein 1 (562 aa).

Positions 1 to 19 (MGTIRSSALILACLALASA) are cleaved as a signal peptide. Disordered stretches follow at residues 46–87 (GYAA…SSPE) and 119–171 (QKEQ…WNPA). Residues 129 to 154 (IEQKEIDPPVQHQEEIVQSRQKEEKP) show a composition bias toward basic and acidic residues. 2 repeat units span residues 172–301 (RHCQ…RPDY) and 305–427 (PCPI…YPNY). Positions 172–427 (RHCQQGRRGI…FAHLAPYPNY (256 aa)) are 2 X approximate repeats. Residues N376, N466, and N538 are each glycosylated (N-linked (GlcNAc...) asparagine). The disordered stretch occupies residues 539-562 (ATGLGQQGPTGGTNVGPAPGSKEE). A compositionally biased stretch (gly residues) spans 543-552 (GQQGPTGGTN). S559 bears the Phosphoserine mark.

Interacts (via C-terminus) with HSPG2 (via C-terminus). Interacts with EFEMP1/FBLN3 and LAMB3. Interacts with MMP9.

It is found in the secreted. Its subcellular location is the extracellular space. The protein resides in the extracellular matrix. In terms of biological role, involved in endochondral bone formation as negative regulator of bone mineralization. Stimulates the proliferation of endothelial cells and promotes angiogenesis. Inhibits MMP9 proteolytic activity. The chain is Extracellular matrix protein 1 (Ecm1) from Rattus norvegicus (Rat).